The following is a 338-amino-acid chain: MQALVNRLWYDRQAGVHWLLVLLLLPLSGLFYLLTSLRRQLFRLGLKASARLDVPVIVVGNITVGGSGKTPTVIYLIELLRRNGYRPGVISRGYGVEFSGCKRVIAGMPANEVGDEPAMIVARTQVPMVIGSDRVAAGKALMDWQAVDVIISDDGLQHYRLKRDIEILVLDGKRRFGNGLLLPAGPLREGRWRQGRVDFTLVNGEGSGPEEFEMALAPGNWRSVADGQVVTANVDKSHESVAIAGIGNPQRFFDTLSEIGVQPSGQHAFDDHQAYSLEAIETVAAGRGVLMTEKDAVKCREFAKSNWWYLPVDAKIAPEFEQQLLTLLKRRENVQQGN.

An ATP-binding site is contributed by 63–70; that stretch reads TVGGSGKT.

Belongs to the LpxK family.

It catalyses the reaction a lipid A disaccharide + ATP = a lipid IVA + ADP + H(+). Its pathway is glycolipid biosynthesis; lipid IV(A) biosynthesis; lipid IV(A) from (3R)-3-hydroxytetradecanoyl-[acyl-carrier-protein] and UDP-N-acetyl-alpha-D-glucosamine: step 6/6. In terms of biological role, transfers the gamma-phosphate of ATP to the 4'-position of a tetraacyldisaccharide 1-phosphate intermediate (termed DS-1-P) to form tetraacyldisaccharide 1,4'-bis-phosphate (lipid IVA). This is Tetraacyldisaccharide 4'-kinase from Shewanella loihica (strain ATCC BAA-1088 / PV-4).